A 506-amino-acid polypeptide reads, in one-letter code: Deoxyguanosinetriphosphate triphosphohydrolase (506 aa).

The HD domain occupies 66-274 (RLTHSLEVQQ…MEAADDISYC (209 aa)).

This sequence belongs to the dGTPase family. Type 1 subfamily. Homotetramer. The cofactor is Mg(2+).

The catalysed reaction is dGTP + H2O = 2'-deoxyguanosine + triphosphate + H(+). Functionally, dGTPase preferentially hydrolyzes dGTP over the other canonical NTPs. The sequence is that of Deoxyguanosinetriphosphate triphosphohydrolase from Yersinia pseudotuberculosis serotype O:3 (strain YPIII).